We begin with the raw amino-acid sequence, 281 residues long: Diphthine methyl ester synthase (281 aa).

Residues Leu-9, Asp-84, Gly-87, 112–113, and Leu-163 contribute to the S-adenosyl-L-methionine site; that span reads SI. At Ser-171 the chain carries Phosphoserine. Positions 225 and 250 each coordinate S-adenosyl-L-methionine.

This sequence belongs to the diphthine synthase family.

The catalysed reaction is 2-[(3S)-amino-3-carboxypropyl]-L-histidyl-[translation elongation factor 2] + 4 S-adenosyl-L-methionine = diphthine methyl ester-[translation elongation factor 2] + 4 S-adenosyl-L-homocysteine + 3 H(+). It participates in protein modification; peptidyl-diphthamide biosynthesis. S-adenosyl-L-methionine-dependent methyltransferase that catalyzes four methylations of the modified target histidine residue in translation elongation factor 2 (EF-2), to form an intermediate called diphthine methyl ester. The four successive methylation reactions represent the second step of diphthamide biosynthesis. The chain is Diphthine methyl ester synthase (Dph5) from Mus musculus (Mouse).